Here is a 340-residue protein sequence, read N- to C-terminus: NAC domain-containing protein 89 (340 aa).

One can recognise an NAC domain in the interval 21–164 (VFPGFKFSPT…AMVVCRVRRN (144 aa)). The DNA-binding element occupies 119 to 170 (IGTKRTLVFHIGRAPKGERTDWIMHEYCVKGVSLDDAMVVCRVRRNKEYNSG). Residues 167 to 181 (YNSGTSQKAPKPNSS) show a composition bias toward polar residues. The tract at residues 167–198 (YNSGTSQKAPKPNSSAEKHAKVQNGATSSGSP) is disordered.

As to quaternary structure, interacts with PAS1.

The protein localises to the cytoplasm. The protein resides in the nucleus. In terms of biological role, transcription factor involved in plant cell division. This is NAC domain-containing protein 89 (NAC089) from Arabidopsis thaliana (Mouse-ear cress).